The sequence spans 653 residues: DNA mismatch repair protein MutL (653 aa).

Positions 375–425 (QNTPDYPRKAPRDNDRDESDNPQVRERAVSNPWVASPKTASTGKERYGSAS) are disordered. A compositionally biased stretch (basic and acidic residues) spans 380–389 (YPRKAPRDND).

This sequence belongs to the DNA mismatch repair MutL/HexB family.

Its function is as follows. This protein is involved in the repair of mismatches in DNA. It is required for dam-dependent methyl-directed DNA mismatch repair. May act as a 'molecular matchmaker', a protein that promotes the formation of a stable complex between two or more DNA-binding proteins in an ATP-dependent manner without itself being part of a final effector complex. This is DNA mismatch repair protein MutL from Vibrio cholerae serotype O1 (strain ATCC 39541 / Classical Ogawa 395 / O395).